The sequence spans 330 residues: Stimulated by retinoic acid gene 8 protein homolog (330 aa).

The Nuclear localization signal (NLS) signature appears at 50-55; it reads RVARRR. The stretch at 88–112 forms a coiled coil; sequence QVLNKAKSHIPELEQTLDNLLKLKA.

As to quaternary structure, interacts with XPO1. Interacts with MEIOSIN. In terms of processing, phosphorylated. In terms of tissue distribution, expressed specifically in testis and fetal ovaries.

Its subcellular location is the cytoplasm. The protein resides in the nucleus. In terms of biological role, meiosis-inducer required for the transition into meiosis for both female and male germ cells. In female germ cells, acts downstream of ZGLP1 as a key effector of the meiotic program: required for premeiotic DNA replication and subsequent events in meiotic prophase. During spermatogenesis, next to its role in meiotic initiation, promotes (but is not required for) spermatogonial differentiation. In complex with MEIOSIN, directly activates the transcription of a subset of critical meiotic genes playing a central role in cell-cycle switching from mitosis to meiosis. The sequence is that of Stimulated by retinoic acid gene 8 protein homolog from Homo sapiens (Human).